Reading from the N-terminus, the 382-residue chain is Intermediate transcription factor 3 large subunit (382 aa).

The protein belongs to the orthopoxvirus OPG150 family. As to quaternary structure, heterodimerizes with protein A8 to form the virus intermediate transcription factor (VITF)-3.

In terms of biological role, acts with RNA polymerase to initiate transcription from intermediate gene promoters. The protein is Intermediate transcription factor 3 large subunit (OPG150) of Cynomys gunnisoni (Gunnison's prairie dog).